Reading from the N-terminus, the 134-residue chain is UPF0412 protein YaaI (134 aa).

An N-terminal signal peptide occupies residues 1–23 (MKSVFTLSASLAISLLLCCTAQA).

The protein belongs to the UPF0412 family.

This chain is UPF0412 protein YaaI, found in Escherichia coli O7:K1 (strain IAI39 / ExPEC).